Consider the following 303-residue polypeptide: Glutamyl-Q tRNA(Asp) synthetase (303 aa).

Residues 9–13 (RFAPS) and Glu-45 each bind L-glutamate. The 'HIGH' region signature appears at 12 to 22 (PSPSGSLHFGS). Cys-101, Cys-103, Tyr-115, and Cys-119 together coordinate Zn(2+). Residues Tyr-172 and Arg-190 each coordinate L-glutamate. Residues 228–232 (KLSKQ) carry the 'KMSKS' region motif. Lys-231 provides a ligand contact to ATP.

This sequence belongs to the class-I aminoacyl-tRNA synthetase family. GluQ subfamily. Requires Zn(2+) as cofactor.

Functionally, catalyzes the tRNA-independent activation of glutamate in presence of ATP and the subsequent transfer of glutamate onto a tRNA(Asp). Glutamate is transferred on the 2-amino-5-(4,5-dihydroxy-2-cyclopenten-1-yl) moiety of the queuosine in the wobble position of the QUC anticodon. The sequence is that of Glutamyl-Q tRNA(Asp) synthetase from Serratia proteamaculans (strain 568).